Reading from the N-terminus, the 114-residue chain is MSKIAKLGSFTLVSGVVATSCYYYFIDRDGYHYKRSVWKQVGDEVQRVIDRKPSLVFSKEKYGDQFDYDYKVSGERVERVPVDHKQLVLRYNSETMKDLWNKEVRALVDWVYSR.

Residues 4 to 26 traverse the membrane as a helical segment; it reads IAKLGSFTLVSGVVATSCYYYFI.

The protein belongs to the MICOS complex subunit Mic12 family. Component of the mitochondrial contact site and cristae organizing system (MICOS) complex.

It is found in the mitochondrion inner membrane. In terms of biological role, component of the MICOS complex, a large protein complex of the mitochondrial inner membrane that plays crucial roles in the maintenance of crista junctions, inner membrane architecture, and formation of contact sites to the outer membrane. This chain is MICOS complex subunit MIC12 (AIM5), found in Candida glabrata (strain ATCC 2001 / BCRC 20586 / JCM 3761 / NBRC 0622 / NRRL Y-65 / CBS 138) (Yeast).